The chain runs to 665 residues: FAD-dependent oxidoreductase domain-containing protein 2 (665 aa).

Residues 1–17 (MGPSGLLVALALHLAVC) form the signal peptide. N-linked (GlcNAc...) asparagine glycosylation is present at asparagine 136. The disordered stretch occupies residues 642–665 (RWLGDHSTAPEPLTQSLDSNKEEL). The Prevents secretion from ER signature appears at 662–665 (KEEL).

It belongs to the FOXRED2 family. In terms of assembly, interacts with SEL1L. May interact with OS9 and DNAJC10. Interacts with TXNDC16. It depends on FAD as a cofactor. In terms of processing, N-glycosylated.

It is found in the endoplasmic reticulum lumen. Functionally, probable flavoprotein which may function in endoplasmic reticulum associated degradation (ERAD). May bind non-native proteins in the endoplasmic reticulum and target them to the ubiquitination machinery for subsequent degradation. This chain is FAD-dependent oxidoreductase domain-containing protein 2, found in Mus musculus (Mouse).